The chain runs to 216 residues: LexA repressor (216 aa).

A DNA-binding region (H-T-H motif) is located at residues 28–48; it reads RAEIAAELGFSSANSAEEHLR. Residues Ser134 and Lys171 each act as for autocatalytic cleavage activity in the active site.

Belongs to the peptidase S24 family. As to quaternary structure, homodimer.

It catalyses the reaction Hydrolysis of Ala-|-Gly bond in repressor LexA.. Represses a number of genes involved in the response to DNA damage (SOS response), including recA and lexA. In the presence of single-stranded DNA, RecA interacts with LexA causing an autocatalytic cleavage which disrupts the DNA-binding part of LexA, leading to derepression of the SOS regulon and eventually DNA repair. The polypeptide is LexA repressor (Paraburkholderia phytofirmans (strain DSM 17436 / LMG 22146 / PsJN) (Burkholderia phytofirmans)).